A 258-amino-acid polypeptide reads, in one-letter code: SLA class II histocompatibility antigen, DQ haplotype D beta chain (258 aa).

A signal peptide spans 1–31 (MVALRLPRGLWTAALTVMLVVLGAPVAEGRD). The interval 32-123 (SPQDFVVQFK…IEEGTTLQRR (92 aa)) is beta-1. Topologically, residues 32–227 (SPQDFVVQFK…RAQSESAQSK (196 aa)) are extracellular. 2 cysteine pairs are disulfide-bonded: Cys-44–Cys-108 and Cys-146–Cys-202. N-linked (GlcNAc...) asparagine glycosylation is present at Asn-48. The segment at 124-217 (VQPTVTISPS…SLQSPILVEW (94 aa)) is beta-2. The Ig-like C1-type domain occupies 126 to 230 (PTVTISPSKA…SESAQSKMLS (105 aa)). The interval 218 to 227 (RAQSESAQSK) is connecting peptide. A helical transmembrane segment spans residues 228-248 (MLSGVGGFVLGLIFLGLGLFI). Over 249–258 (RHRSQKGLVR) the chain is Cytoplasmic.

The protein belongs to the MHC class II family.

It localises to the membrane. This Sus scrofa (Pig) protein is SLA class II histocompatibility antigen, DQ haplotype D beta chain.